The primary structure comprises 442 residues: Cytokine receptor-like factor 3 (442 aa).

Methionine 1 carries the N-acetylmethionine modification. The stretch at 10–57 (ELLLQEARENVEAAQSYRRELGHRLEGLREARRQIKESASQTRDVLKQ) forms a coiled coil. Positions 181-274 (PPVQIEELIE…PQIGHSTLVP (94 aa)) constitute a Fibronectin type-III domain.

The protein belongs to the cytokine receptor-like factor 3 family. Expressed in several embryonic and adult tissues, including adult and fetal brain, liver, spleen and pancreas. Expressed in adult, but not fetal kidney. Expressed in skin and squamous cell carcinoma (SCC) and in several other cancer types. Also detected in lesion actinic keratosis (AK).

The protein localises to the cytoplasm. May play a role in the negative regulation of cell cycle progression. The chain is Cytokine receptor-like factor 3 (CRLF3) from Homo sapiens (Human).